The chain runs to 256 residues: MAAESQLKRVIETLRRLGIEEVLKLERRDPQYRAVCNVVKRHGETVGSRLAMLNALISYRLTGKGEEHWEYFGKYFSQLEVIDLCRDFLKYIETSPFLKIGVEARKKRALKACDYVPNLEDLGLTLRQLSHIVGARREQKTLVFTIKILNYAYMCSRGVNRVLPFDIPIPVDYRVARLTWCAGLIDFPPEEALRRYEAVQKIWDAVARETGIPPLHLDTLLWLAGRAVLYGENLHGVPKEVIALFQWRGGCRPPSE.

Q31, S58, and W69 together coordinate 8-oxoguanine. Positions 125–184 are helix-hairpin-helix; sequence TLRQLSHIVGARREQKTLVFTIKILNYAYMCSRGVNRVLPFDIPIPVDYRVARLTWCAGL. The active-site Schiff-base intermediate with DNA is the K140. 2 residues coordinate 8-oxoguanine: F144 and P170. D172 is a catalytic residue. 8-oxoguanine-binding residues include D218 and W222.

Belongs to the archaeal N-glycosylase/DNA lyase (AGOG) family.

It catalyses the reaction 2'-deoxyribonucleotide-(2'-deoxyribose 5'-phosphate)-2'-deoxyribonucleotide-DNA = a 3'-end 2'-deoxyribonucleotide-(2,3-dehydro-2,3-deoxyribose 5'-phosphate)-DNA + a 5'-end 5'-phospho-2'-deoxyribonucleoside-DNA + H(+). Functionally, DNA repair enzyme that is part of the base excision repair (BER) pathway; protects from oxidative damage by removing the major product of DNA oxidation, 8-oxoguanine (GO), from single- and double-stranded DNA substrates. The chain is N-glycosylase/DNA lyase from Pyrobaculum aerophilum (strain ATCC 51768 / DSM 7523 / JCM 9630 / CIP 104966 / NBRC 100827 / IM2).